A 1373-amino-acid chain; its full sequence is DNA-directed RNA polymerase subunit beta'' (1373 aa).

Residues cysteine 220, cysteine 291, cysteine 298, and cysteine 301 each coordinate Zn(2+).

The protein belongs to the RNA polymerase beta' chain family. RpoC2 subfamily. In plastids the minimal PEP RNA polymerase catalytic core is composed of four subunits: alpha, beta, beta', and beta''. When a (nuclear-encoded) sigma factor is associated with the core the holoenzyme is formed, which can initiate transcription. The cofactor is Zn(2+).

The protein resides in the plastid. The protein localises to the chloroplast. It carries out the reaction RNA(n) + a ribonucleoside 5'-triphosphate = RNA(n+1) + diphosphate. DNA-dependent RNA polymerase catalyzes the transcription of DNA into RNA using the four ribonucleoside triphosphates as substrates. The chain is DNA-directed RNA polymerase subunit beta'' from Silene latifolia (White campion).